The sequence spans 86 residues: Probable weak neurotoxin NNAM3 (86 aa).

Residues 1-21 (MKTLLLTLVVVTIVCLDLGYT) form the signal peptide. Disulfide bonds link Cys24-Cys45, Cys27-Cys32, Cys38-Cys63, Cys67-Cys78, and Cys79-Cys84.

It belongs to the three-finger toxin family. Ancestral subfamily. Orphan group II sub-subfamily. Expressed by the venom gland.

It is found in the secreted. Functionally, binds with low affinity to muscular (alpha-1-beta-1-delta-epsilon/CHRNA1-CHRNB1-CHRND-CHRNE) and very low affinity to neuronal (alpha-7/CHRNA7) nicotinic acetylcholine receptor (nAChR). The protein is Probable weak neurotoxin NNAM3 of Naja atra (Chinese cobra).